Here is a 650-residue protein sequence, read N- to C-terminus: DNA gyrase subunit B (650 aa).

Residues asparagine 429 to proline 543 form the Toprim domain. Mg(2+) is bound by residues glutamate 435, aspartate 508, and aspartate 510.

The protein belongs to the type II topoisomerase GyrB family. Heterotetramer, composed of two GyrA and two GyrB chains. In the heterotetramer, GyrA contains the active site tyrosine that forms a transient covalent intermediate with DNA, while GyrB binds cofactors and catalyzes ATP hydrolysis. It depends on Mg(2+) as a cofactor. The cofactor is Mn(2+). Requires Ca(2+) as cofactor.

It localises to the cytoplasm. The catalysed reaction is ATP-dependent breakage, passage and rejoining of double-stranded DNA.. In terms of biological role, a type II topoisomerase that negatively supercoils closed circular double-stranded (ds) DNA in an ATP-dependent manner to modulate DNA topology and maintain chromosomes in an underwound state. Negative supercoiling favors strand separation, and DNA replication, transcription, recombination and repair, all of which involve strand separation. Also able to catalyze the interconversion of other topological isomers of dsDNA rings, including catenanes and knotted rings. Type II topoisomerases break and join 2 DNA strands simultaneously in an ATP-dependent manner. The chain is DNA gyrase subunit B from Streptococcus pyogenes serotype M18 (strain MGAS8232).